The chain runs to 131 residues: uncharacterized protein (131 aa).

The chain crosses the membrane as a helical span at residues 17 to 39; that stretch reads VILLILILLPVVFLHIMLATWGL.

It is found in the membrane. This is an uncharacterized protein from Archaeoglobus fulgidus (strain ATCC 49558 / DSM 4304 / JCM 9628 / NBRC 100126 / VC-16).